Consider the following 339-residue polypeptide: Ketol-acid reductoisomerase (NADP(+)) (339 aa).

The KARI N-terminal Rossmann domain occupies 1–182; that stretch reads MRVYYDRDAD…GGGRAGIIET (182 aa). NADP(+)-binding positions include 24–27, arginine 48, serine 51, serine 53, and 83–86; these read YGSQ and DELQ. The active site involves histidine 108. Residue glycine 134 coordinates NADP(+). A KARI C-terminal knotted domain is found at 183 to 328; the sequence is TFKEECETDL…AKLRDMMPWI (146 aa). 4 residues coordinate Mg(2+): aspartate 191, glutamate 195, glutamate 227, and glutamate 231. Serine 252 provides a ligand contact to substrate.

This sequence belongs to the ketol-acid reductoisomerase family. Mg(2+) is required as a cofactor.

The catalysed reaction is (2R)-2,3-dihydroxy-3-methylbutanoate + NADP(+) = (2S)-2-acetolactate + NADPH + H(+). It carries out the reaction (2R,3R)-2,3-dihydroxy-3-methylpentanoate + NADP(+) = (S)-2-ethyl-2-hydroxy-3-oxobutanoate + NADPH + H(+). It participates in amino-acid biosynthesis; L-isoleucine biosynthesis; L-isoleucine from 2-oxobutanoate: step 2/4. The protein operates within amino-acid biosynthesis; L-valine biosynthesis; L-valine from pyruvate: step 2/4. Involved in the biosynthesis of branched-chain amino acids (BCAA). Catalyzes an alkyl-migration followed by a ketol-acid reduction of (S)-2-acetolactate (S2AL) to yield (R)-2,3-dihydroxy-isovalerate. In the isomerase reaction, S2AL is rearranged via a Mg-dependent methyl migration to produce 3-hydroxy-3-methyl-2-ketobutyrate (HMKB). In the reductase reaction, this 2-ketoacid undergoes a metal-dependent reduction by NADPH to yield (R)-2,3-dihydroxy-isovalerate. This Bradyrhizobium diazoefficiens (strain JCM 10833 / BCRC 13528 / IAM 13628 / NBRC 14792 / USDA 110) protein is Ketol-acid reductoisomerase (NADP(+)).